Here is a 284-residue protein sequence, read N- to C-terminus: 2,3,4,5-tetrahydropyridine-2,6-dicarboxylate N-succinyltransferase (284 aa).

Arg111 and Asp148 together coordinate substrate.

The protein belongs to the transferase hexapeptide repeat family. As to quaternary structure, homotrimer.

Its subcellular location is the cytoplasm. It carries out the reaction (S)-2,3,4,5-tetrahydrodipicolinate + succinyl-CoA + H2O = (S)-2-succinylamino-6-oxoheptanedioate + CoA. It participates in amino-acid biosynthesis; L-lysine biosynthesis via DAP pathway; LL-2,6-diaminopimelate from (S)-tetrahydrodipicolinate (succinylase route): step 1/3. This is 2,3,4,5-tetrahydropyridine-2,6-dicarboxylate N-succinyltransferase from Brucella anthropi (strain ATCC 49188 / DSM 6882 / CCUG 24695 / JCM 21032 / LMG 3331 / NBRC 15819 / NCTC 12168 / Alc 37) (Ochrobactrum anthropi).